The chain runs to 70 residues: U2-agatoxin-Ao1d (70 aa).

Positions 1 to 20 (MRAIIYLLLISAMVFSMTKA) are cleaved as a signal peptide. Positions 21 to 34 (VPEEEGLQLSEDER) are excised as a propeptide. Intrachain disulfides connect Cys-37/Cys-53, Cys-44/Cys-58, and Cys-52/Cys-68. Residue Leu-69 is modified to Leucine amide.

The protein belongs to the neurotoxin 01 (U2-agtx) family. Expressed by the venom gland.

It is found in the secreted. In terms of biological role, insect active toxin causing rapid but reversible paralysis in crickets. No activity shown in mammals. Does not show effect on mammalian voltage-gated calcium channels. This Agelena orientalis (Funnel-web spider) protein is U2-agatoxin-Ao1d.